Consider the following 344-residue polypeptide: Uroporphyrinogen decarboxylase (344 aa).

Residues 25-29, aspartate 75, tyrosine 152, serine 207, and histidine 323 contribute to the substrate site; that span reads RQAGR.

It belongs to the uroporphyrinogen decarboxylase family. As to quaternary structure, homodimer.

Its subcellular location is the cytoplasm. The enzyme catalyses uroporphyrinogen III + 4 H(+) = coproporphyrinogen III + 4 CO2. It participates in porphyrin-containing compound metabolism; protoporphyrin-IX biosynthesis; coproporphyrinogen-III from 5-aminolevulinate: step 4/4. Functionally, catalyzes the decarboxylation of four acetate groups of uroporphyrinogen-III to yield coproporphyrinogen-III. This is Uroporphyrinogen decarboxylase from Ruegeria pomeroyi (strain ATCC 700808 / DSM 15171 / DSS-3) (Silicibacter pomeroyi).